We begin with the raw amino-acid sequence, 169 residues long: Peptide deformylase (169 aa).

The Fe cation site is built by C91 and H133. E134 is an active-site residue. H137 is a binding site for Fe cation.

Belongs to the polypeptide deformylase family. It depends on Fe(2+) as a cofactor.

The enzyme catalyses N-terminal N-formyl-L-methionyl-[peptide] + H2O = N-terminal L-methionyl-[peptide] + formate. Functionally, removes the formyl group from the N-terminal Met of newly synthesized proteins. Requires at least a dipeptide for an efficient rate of reaction. N-terminal L-methionine is a prerequisite for activity but the enzyme has broad specificity at other positions. The sequence is that of Peptide deformylase from Erwinia tasmaniensis (strain DSM 17950 / CFBP 7177 / CIP 109463 / NCPPB 4357 / Et1/99).